We begin with the raw amino-acid sequence, 100 residues long: MAKKSMIARDVKRKKMVERFSDRRAALMAAFHAAKDPMERLEIHRKIQGLPRNSAPNRVRNRCWATGKPRGVYRDFGLCRNQLRERAHKGELPGVVKSSW.

This sequence belongs to the universal ribosomal protein uS14 family. Part of the 30S ribosomal subunit. Contacts proteins S3 and S10.

In terms of biological role, binds 16S rRNA, required for the assembly of 30S particles and may also be responsible for determining the conformation of the 16S rRNA at the A site. In Synechococcus sp. (strain CC9311), this protein is Small ribosomal subunit protein uS14.